We begin with the raw amino-acid sequence, 546 residues long: Calcitonin receptor-like protein 1 (546 aa).

The Cytoplasmic portion of the chain corresponds to 1-171 (MADATSPFNV…EVARNARKLE (171 aa)). Residues 172 to 192 (FVGLGLSLVSLILAISIFSYF) form a helical membrane-spanning segment. Topologically, residues 193–205 (RRLRVFRNLLHLH) are extracellular. A helical transmembrane segment spans residues 206–226 (LMIAMLMVVILRLVLYIDLIF). Over 227 to 251 (TGENGPHTNSAEGKTINTMPIVCEG) the chain is Cytoplasmic. Residues 252–272 (MFFFLEYFKTVTFCWMFLEGI) traverse the membrane as a helical segment. Residues 273 to 292 (YLNNQIVFGFFNSEPKLLPY) are Extracellular-facing. Residues 293–313 (FIAGYGIPLVHTMLWLLVVLI) traverse the membrane as a helical segment. Residues 314–333 (KKDFKVERCLGSYYLEPEFW) lie on the Cytoplasmic side of the membrane. The chain crosses the membrane as a helical span at residues 334–354 (ILDGPRMAELVINLFFICNVI). Over 355 to 377 (RVLYSKVRESNNTSEAGLKKSVK) the chain is Extracellular. N-linked (GlcNAc...) asparagine glycosylation is found at asparagine 365 and asparagine 366. A helical membrane pass occupies residues 378-398 (AAMMLLPLLGVPNIMQTIPFA). The Cytoplasmic segment spans residues 399 to 403 (PTRDN). Residues 404 to 424 (IMVFAVWTYTASFTYMYQGLM) form a helical membrane-spanning segment. Residues 425-546 (VASIYCFTNK…EGSNRSTKSP (122 aa)) are Extracellular-facing. N-linked (GlcNAc...) asparagine glycans are attached at residues asparagine 472 and asparagine 476. A disordered region spans residues 472–546 (NGTANASAPQ…EGSNRSTKSP (75 aa)). Over residues 473–485 (GTANASAPQTNNA) the composition is skewed to polar residues. A compositionally biased stretch (basic and acidic residues) spans 500–520 (KGSDDSTTKLMKDAVMEEEKN). N-linked (GlcNAc...) asparagine glycosylation is present at asparagine 540.

This sequence belongs to the G-protein coupled receptor 2 family. In terms of tissue distribution, expression was observed in the mechanosensory neuron pairs PLM, ALM, FLP, OLQD, and OLQV, the chemosensory neurons PHA, PHB, RMEV, the ring motor neurons RMED, and the pharyngeal interneuron pair I1. Expression in sensory neurons PHA, PQR and URY are responsible for mate searching behavior. Expressed in AIY, RIM, RIA, and other neurons.

The protein localises to the cell membrane. Functionally, G-protein coupled receptor for PDF neuropeptides. Plays a role in responses to environmental signals, including chemicals and touch, and in modulating locomotory behaviors. Capable of transducing signals via an adenylate cyclase acy-1 cAMP-dependent pathway. Required to regulate the sex-specific expression of TGFbeta-like daf-7 in the ASJ chemosensory neurons, perhaps acting via acy-1. Involved in modulating mate searching behavior independent of nutritional status. In the presence of food, plays a role in initiating and extending exploratory roaming behavior, perhaps acting in AIY, RIM, RIA, and other neurons, in opposition to 5-hydroxytryptamine (serotonin) signaling. Involved in mediating arousal from the sleep-like state called lethargus, which occurs during molting between larval and adult stages, in part by regulating touch sensitivity. May play a role in circadian rhythms of locomotor activity. G-protein coupled receptor which is activated by neuropeptides PDF-1 and PDF-2. Probably acts through the G-alpha(s) type of G proteins to elevate cAMP levels. In terms of biological role, G-protein coupled receptor which is activated by neuropeptides PDF-1 and PDF-2; however, activation is lower compared to isoforms a and b. Probably inhibits cAMP levels through the G-alpha(i/o) type of G proteins. The polypeptide is Calcitonin receptor-like protein 1 (pdfr-1) (Caenorhabditis elegans).